The sequence spans 270 residues: Endonuclease 4 (270 aa).

9 residues coordinate Zn(2+): His-69, His-108, Glu-139, Asp-169, His-172, His-204, Asp-217, His-219, and Glu-248.

The protein belongs to the AP endonuclease 2 family. Zn(2+) serves as cofactor.

It carries out the reaction Endonucleolytic cleavage to 5'-phosphooligonucleotide end-products.. Its function is as follows. Endonuclease IV plays a role in DNA repair. It cleaves phosphodiester bonds at apurinic or apyrimidinic (AP) sites, generating a 3'-hydroxyl group and a 5'-terminal sugar phosphate. In addition, possesses a 3'-5' exonuclease activity. The polypeptide is Endonuclease 4 (Thermus thermophilus (strain ATCC BAA-163 / DSM 7039 / HB27)).